A 35-amino-acid chain; its full sequence is Beta/delta-theraphotoxin-Pre1a (35 aa).

Cystine bridges form between Cys3-Cys18, Cys10-Cys23, and Cys17-Cys30.

Belongs to the neurotoxin 10 (Hwtx-1) family. In terms of tissue distribution, expressed by the venom gland.

It localises to the secreted. In terms of biological role, gating-modifier toxin that both inhibits the peak current of human Nav1.1/SCN1A, rat Nav1.2/SCN2A, human Nav1.6/SCN8A, and human Nav1.7/SCN9A and concurrently inhibits fast inactivation of human Nav1.1 and rat Nav1.3/SCN3A. The relative rank order potency for Nav modulation is Nav1.3 (inactivation EC(50)=45 nM) &gt; Nav1.7 &gt; Nav1.2 &gt; Nav1.1 (inactivation) &gt; Nav1.1 &gt; Nav1.6 &gt; Nav1.3 (IC(50)=8 uM). The DII and DIV S3-S4 loops of Nav channel voltage sensors are important for the interaction of this toxin with Nav channels but cannot account for its unique subtype selectivity. It is the variability of the S1-S2 loops between NaV channels which contributes substantially to the selectivity profile observed for this toxin, particularly with regards to fast inactivation. This toxin may bind the channel in the resting state. This chain is Beta/delta-theraphotoxin-Pre1a, found in Psalmopoeus reduncus (Costa Rican orangemouth tarantula).